We begin with the raw amino-acid sequence, 735 residues long: Delta-1-pyrroline-5-carboxylate synthase 2 (735 aa).

The interval 1–315 (MGRGGIGGAG…WGCSKEATAR (315 aa)) is glutamate 5-kinase. Positions 79, 176, and 195 each coordinate substrate. Residues 215–216 (SD), 221–226 (YSGPPS), and 255–261 (RGGMQAK) contribute to the ATP site. The tract at residues 316-735 (EMAVAARDCS…VYTHRELPLQ (420 aa)) is gamma-glutamyl phosphate reductase.

This sequence in the N-terminal section; belongs to the glutamate 5-kinase family. In the C-terminal section; belongs to the gamma-glutamyl phosphate reductase family.

The catalysed reaction is L-glutamate + ATP = L-glutamyl 5-phosphate + ADP. It catalyses the reaction L-glutamate 5-semialdehyde + phosphate + NADP(+) = L-glutamyl 5-phosphate + NADPH + H(+). Its pathway is amino-acid biosynthesis; L-proline biosynthesis; L-glutamate 5-semialdehyde from L-glutamate: step 1/2. The protein operates within amino-acid biosynthesis; L-proline biosynthesis; L-glutamate 5-semialdehyde from L-glutamate: step 2/2. With respect to regulation, feedback regulated by proline. Functionally, P5CS plays a key role in proline biosynthesis, leading to osmoregulation in plants. Involved in abiotic stress tolerance. The polypeptide is Delta-1-pyrroline-5-carboxylate synthase 2 (Oryza sativa subsp. japonica (Rice)).